The primary structure comprises 830 residues: Penicillin-binding protein 1A (830 aa).

The segment covering 1–17 (MTERKREHKDRKQKKNS) has biased composition (basic residues). The interval 1 to 20 (MTERKREHKDRKQKKNSPKN) is disordered. The Cytoplasmic segment spans residues 1-30 (MTERKREHKDRKQKKNSPKNQSKVTKFLKW). Residues 31-51 (FFIGILLLGITAVTVVGIYVL) traverse the membrane as a helical; Signal-anchor for type II membrane protein segment. Residues 52-830 (SIIRSSPELD…QNGQNNNITQ (779 aa)) are Extracellular-facing. A transglycosylase region spans residues 72 to 244 (SILYDDQGNF…PTSYDGLSEA (173 aa)). Glu111 serves as the catalytic Proton donor; for transglycosylase activity. The transpeptidase stretch occupies residues 378-663 (ASATIIDYKT…TSPIFGKIMG (286 aa)). The active-site Acyl-ester intermediate; for transpeptidase activity is the Ser417. The segment at 731-830 (APDTNDNNNS…QNGQNNNITQ (100 aa)) is disordered. Low complexity predominate over residues 735–746 (NDNNNSGANEGN). Residues 747-758 (KQQETKPEEVKP) are compositionally biased toward basic and acidic residues. Composition is skewed to low complexity over residues 759 to 807 (NENN…NTNN) and 816 to 830 (GNNQ…NITQ).

The protein in the N-terminal section; belongs to the glycosyltransferase 51 family. In the C-terminal section; belongs to the transpeptidase family.

Its subcellular location is the cell membrane. It catalyses the reaction [GlcNAc-(1-&gt;4)-Mur2Ac(oyl-L-Ala-gamma-D-Glu-L-Lys-D-Ala-D-Ala)](n)-di-trans,octa-cis-undecaprenyl diphosphate + beta-D-GlcNAc-(1-&gt;4)-Mur2Ac(oyl-L-Ala-gamma-D-Glu-L-Lys-D-Ala-D-Ala)-di-trans,octa-cis-undecaprenyl diphosphate = [GlcNAc-(1-&gt;4)-Mur2Ac(oyl-L-Ala-gamma-D-Glu-L-Lys-D-Ala-D-Ala)](n+1)-di-trans,octa-cis-undecaprenyl diphosphate + di-trans,octa-cis-undecaprenyl diphosphate + H(+). The enzyme catalyses Preferential cleavage: (Ac)2-L-Lys-D-Ala-|-D-Ala. Also transpeptidation of peptidyl-alanyl moieties that are N-acyl substituents of D-alanine.. The protein operates within cell wall biogenesis; peptidoglycan biosynthesis. In terms of biological role, cell wall formation. Synthesis of cross-linked peptidoglycan from the lipid intermediates. The enzyme has a penicillin-insensitive transglycosylase N-terminal domain (formation of linear glycan strands) and a penicillin-sensitive transpeptidase C-terminal domain (cross-linking of the peptide subunits). The sequence is that of Penicillin-binding protein 1A (pbpA) from Clostridium perfringens (strain ATCC 13124 / DSM 756 / JCM 1290 / NCIMB 6125 / NCTC 8237 / Type A).